The primary structure comprises 495 residues: Iroquois-class homeodomain protein irx-4-B (495 aa).

A DNA-binding region (homeobox; TALE-type) is located at residues 141-203 (GSTRRKNATR…NARRRLKKEN (63 aa)). Residues 203–245 (NKMTWPPRNKCSDEKRPYDEEEEEEEDSQKATIKNEKKTVDEE) form a disordered region. Basic and acidic residues predominate over residues 235–245 (IKNEKKTVDEE).

Belongs to the TALE/IRO homeobox family.

Its subcellular location is the nucleus. Its function is as follows. Acts partially redundantly with other irx members in neural patterning. Required for formation of the posterior forebrain, midbrain, hindbrain, and to a lesser extent, spinal cord. Patterns the neuroectoderm in both the anterior/posterior and dorsal/ventral axes. Does not appear to play a role in pronephros kidney development. This chain is Iroquois-class homeodomain protein irx-4-B (irx4-b), found in Xenopus laevis (African clawed frog).